Here is a 956-residue protein sequence, read N- to C-terminus: Dual specificity protein kinase YAK1 homolog (956 aa).

The Protein kinase domain occupies 122 to 464 (YIVKDLLGHG…PFQAAKHPFI (343 aa)). Residues 128 to 136 (LGHGTFGQV) and lysine 151 each bind ATP. Serine 222 carries the post-translational modification Phosphoserine. Catalysis depends on aspartate 249, which acts as the Proton acceptor. Disordered regions lie at residues 620–657 (LGTSPSQFTPNTNNQFLAGSPGHHGPTSPVRNSCHGSP), 672–781 (SAGY…NYSD), and 806–956 (GSTD…GSIA). A compositionally biased stretch (polar residues) spans 622–636 (TSPSQFTPNTNNQFL). The span at 672 to 691 (SAGYSGGSQSQDSSLSQAQG) shows a compositional bias: low complexity. Polar residues-rich tracts occupy residues 697–713 (FYQNEGYSGQFSGSPSR), 725–757 (QTQGGTTLSTGYSTHNNANSSLRSNMYNPSSTA), and 806–817 (GSTDASSYSRRF). Low complexity predominate over residues 818–830 (NSNASTSSSNPTT). 3 stretches are compositionally biased toward polar residues: residues 838–849 (QAFSQVETGSPP), 870–884 (VSQNSPSRLGQQPPQ), and 902–912 (MNAQLPPSNTN). Residues 913-924 (SGGQQRSPRSSS) are compositionally biased toward low complexity. The segment covering 937–947 (NHVPNVPSTSH) has biased composition (polar residues).

It belongs to the protein kinase superfamily. Ser/Thr protein kinase family. Autophosphorylated at Ser-222.

The catalysed reaction is L-seryl-[protein] + ATP = O-phospho-L-seryl-[protein] + ADP + H(+). The enzyme catalyses L-threonyl-[protein] + ATP = O-phospho-L-threonyl-[protein] + ADP + H(+). It carries out the reaction L-tyrosyl-[protein] + ATP = O-phospho-L-tyrosyl-[protein] + ADP + H(+). Its function is as follows. Dual specificity protein kinase that phosphorylates ANN1, ANN2 and CP29B at serine and threonine residues, and ANN1, ANN2 and ANN4 at tyrosine residues. May regulate the phosphorylation status of annexin proteins. Acts as a positive regulator in abscisic acid (ABA)-mediated regulation of postgermination growth and drought response. May regulate the expression of ABA-responsive genes such as RD22, RD29A, LTI65/RD29B and RAB18. The protein is Dual specificity protein kinase YAK1 homolog of Arabidopsis thaliana (Mouse-ear cress).